Here is a 400-residue protein sequence, read N- to C-terminus: Elongation factor Tu (400 aa).

Positions Lys-10 to Gln-209 constitute a tr-type G domain. Residues Gly-19–Thr-26 are G1. Gly-19–Thr-26 lines the GTP pocket. Thr-26 provides a ligand contact to Mg(2+). The segment at Gly-60–Asn-64 is G2. The G3 stretch occupies residues Asp-81–Gly-84. GTP contacts are provided by residues Asp-81–His-85 and Asn-136–Asp-139. Residues Asn-136–Asp-139 are G4. Positions Ser-174–Leu-176 are G5.

The protein belongs to the TRAFAC class translation factor GTPase superfamily. Classic translation factor GTPase family. EF-Tu/EF-1A subfamily. In terms of assembly, monomer.

The protein resides in the cytoplasm. It carries out the reaction GTP + H2O = GDP + phosphate + H(+). GTP hydrolase that promotes the GTP-dependent binding of aminoacyl-tRNA to the A-site of ribosomes during protein biosynthesis. The polypeptide is Elongation factor Tu (Caldicellulosiruptor bescii (strain ATCC BAA-1888 / DSM 6725 / KCTC 15123 / Z-1320) (Anaerocellum thermophilum)).